A 159-amino-acid polypeptide reads, in one-letter code: Ribosomal RNA large subunit methyltransferase H (159 aa).

Residues Leu76, Gly108, and 127-132 (FSKMTF) contribute to the S-adenosyl-L-methionine site.

The protein belongs to the RNA methyltransferase RlmH family. As to quaternary structure, homodimer.

Its subcellular location is the cytoplasm. It catalyses the reaction pseudouridine(1915) in 23S rRNA + S-adenosyl-L-methionine = N(3)-methylpseudouridine(1915) in 23S rRNA + S-adenosyl-L-homocysteine + H(+). Its function is as follows. Specifically methylates the pseudouridine at position 1915 (m3Psi1915) in 23S rRNA. The polypeptide is Ribosomal RNA large subunit methyltransferase H (Oceanobacillus iheyensis (strain DSM 14371 / CIP 107618 / JCM 11309 / KCTC 3954 / HTE831)).